Here is a 286-residue protein sequence, read N- to C-terminus: Nucleotide-binding protein VC_2532 (286 aa).

8 to 15 contributes to the ATP binding site; sequence GQSGAGKS. 56–59 serves as a coordination point for GTP; it reads DIRN.

This sequence belongs to the RapZ-like family.

Displays ATPase and GTPase activities. The sequence is that of Nucleotide-binding protein VC_2532 from Vibrio cholerae serotype O1 (strain ATCC 39315 / El Tor Inaba N16961).